The chain runs to 570 residues: Trans-cinnamate:CoA ligase, peroxisomal (570 aa).

Residues 568-570 carry the Microbody targeting signal motif; sequence ARL.

Belongs to the ATP-dependent AMP-binding enzyme family. As to quaternary structure, monomer. K(+) is required as a cofactor. In terms of tissue distribution, mostly expressed in flower organs, with highest levels in corollas and petal limbs, and, to a lesser extent, in petal tubes, sepals, pistils, stamen, stigma, anthers and ovaries. Also present at low levels in leaves, stems and roots.

It localises to the peroxisome. It carries out the reaction (E)-4-coumarate + ATP + CoA = (E)-4-coumaroyl-CoA + AMP + diphosphate. The catalysed reaction is (E)-caffeate + ATP + CoA = (E)-caffeoyl-CoA + AMP + diphosphate. It catalyses the reaction (E)-cinnamate + ATP + CoA = (E)-cinnamoyl-CoA + AMP + diphosphate. It participates in phenylpropanoid metabolism; trans-cinnamate biosynthesis. It functions in the pathway phytoalexin biosynthesis; 3,4',5-trihydroxystilbene biosynthesis; 3,4',5-trihydroxystilbene from trans-4-coumarate: step 1/2. Involved in the biosynthesis of floral volatile benzenoid/phenylpropanoid (FVBP) scent (e.g. benzylbenzoate, phenylethylbenzoate, and methylbenzoate). Catalyzes the formation of CoA esters of cinnamic acid, and, with lower efficiency, of 4-coumaric acid and caffeic acid. The protein is Trans-cinnamate:CoA ligase, peroxisomal of Petunia hybrida (Petunia).